Consider the following 396-residue polypeptide: S-adenosylmethionine synthase 4 (396 aa).

Residue Glu12 coordinates Mg(2+). His18 lines the ATP pocket. Glu46 provides a ligand contact to K(+). L-methionine-binding residues include Glu59 and Gln102. Residues 170-172 (DGK), 238-241 (SGRF), Asp249, 255-256 (RK), Ala272, Lys276, and Lys280 contribute to the ATP site. Asp249 contacts L-methionine. Residue Lys280 coordinates L-methionine.

Belongs to the AdoMet synthase family. In terms of assembly, homotetramer. It depends on Mn(2+) as a cofactor. The cofactor is Mg(2+). Co(2+) serves as cofactor. K(+) is required as a cofactor.

Its subcellular location is the cytoplasm. It carries out the reaction L-methionine + ATP + H2O = S-adenosyl-L-methionine + phosphate + diphosphate. Its pathway is amino-acid biosynthesis; S-adenosyl-L-methionine biosynthesis; S-adenosyl-L-methionine from L-methionine: step 1/1. Functionally, catalyzes the formation of S-adenosylmethionine from methionine and ATP. The reaction comprises two steps that are both catalyzed by the same enzyme: formation of S-adenosylmethionine (AdoMet) and triphosphate, and subsequent hydrolysis of the triphosphate. The polypeptide is S-adenosylmethionine synthase 4 (SAM4) (Hordeum vulgare (Barley)).